We begin with the raw amino-acid sequence, 2227 residues long: Genome polyprotein (2227 aa).

2 short sequence motifs ((L)YPX(n)L motif) span residues 167–171 and 200–205; these read YPHGL and YPVWEL. Residues 766-836 form an involved in P1-2A pentamerization region; that stretch reads MMSRIAAGDL…PRKMKGLFSQ (71 aa). A helical membrane pass occupies residues 1011 to 1031; the sequence is TVEIINTVLCFVKSGILLYVI. A membrane-penetrating ability region spans residues 1043 to 1070; it reads IGLLRVMNYADIGCSVISCGKVFSKMLE. One can recognise an SF3 helicase domain in the interval 1204 to 1366; it reads HQKLKNLGSI…SFFKNPHNDM (163 aa). An ATP-binding site is contributed by 1230–1237; that stretch reads GKRGGGKS. Residues 1462–1482 traverse the membrane as a helical segment; it reads WVAVGAAVGILGVLVGGWFVY. At Y1499 the chain carries O-(5'-phospho-RNA)-tyrosine. The 215-residue stretch at 1514–1728 folds into the Peptidase C3 domain; that stretch reads DPVESQSTLE…VAKLVTQEMF (215 aa). Residues H1563, D1603, and C1691 each act as for protease 3C activity in the active site. One can recognise a RdRp catalytic domain in the interval 1976–2097; it reads DVGLDLDFSA…VFSRDVQIDN (122 aa).

The protein belongs to the picornaviridae polyprotein family. In terms of assembly, homodimer. Homomultimer; probably interacts with membranes in a multimeric form. Seems to assemble into amyloid-like fibers. As to quaternary structure, interacts with host ACBD3. Homodimer. Monomer. Interacts with protein 3CD. In terms of assembly, interacts with protein 3AB. As to quaternary structure, interacts with human MAVS. Homodimer; disulfide-linked. In terms of assembly, homopentamer. Homooligomer. As to quaternary structure, interacts with capsid protein VP2. Interacts with capsid protein VP3. Interacts with capsid protein VP1. Interacts with capsid protein VP3. In terms of assembly, interacts with capsid protein VP1. Interacts with capsid protein VP2. Specific enzymatic cleavages by viral protease in vivo yield a variety of precursors and mature proteins. Polyprotein processing intermediates are produced, such as P1-2A which is a functional precursor of the structural proteins, VP0 which is a VP4-VP2 precursor, VP1-2A precursor, 3ABC precursor which is a stable and catalytically active precursor of 3A, 3B and 3C proteins, 3AB and 3CD precursors. The assembly signal 2A is removed from VP1-2A by a host protease, possibly host Cathepsin L. This cleavage occurs over a region of 3 amino-acids probably generating VP1 proteins with heterogeneous C-termini. In terms of processing, during virion maturation, immature virions are rendered infectious following cleavage of VP0 into VP4 and VP2. This maturation seems to be an autocatalytic event triggered by the presence of RNA in the capsid and is followed by a conformational change of the particle. Post-translationally, the assembly signal 2A is removed from VP1-2A by a host protease, possibly host Cathepsin L in naked virions. This cleavage does not occur in enveloped virions. This cleavage occurs over a region of 3 amino-acids probably generating VP1 proteins with heterogeneous C-termini. VPg is uridylylated prior to priming replication into VPg-pUpU. In terms of processing, unlike other picornaviruses, does not seem to be myristoylated.

The protein localises to the virion. It is found in the host endosome. Its subcellular location is the host multivesicular body. The protein resides in the host membrane. It localises to the host mitochondrion outer membrane. The protein localises to the host cytoplasm. It is found in the host cytoplasmic vesicle membrane. The catalysed reaction is RNA(n) + a ribonucleoside 5'-triphosphate = RNA(n+1) + diphosphate. It carries out the reaction a ribonucleoside 5'-triphosphate + H2O = a ribonucleoside 5'-diphosphate + phosphate + H(+). It catalyses the reaction Selective cleavage of Gln-|-Gly bond in the poliovirus polyprotein. In other picornavirus reactions Glu may be substituted for Gln, and Ser or Thr for Gly.. In terms of biological role, capsid proteins VP1, VP2, and VP3 form a closed capsid enclosing the viral positive strand RNA genome. All these proteins contain a beta-sheet structure called beta-barrel jelly roll. Together they form an icosahedral capsid (T=3) composed of 60 copies of each VP1, VP2, and VP3, with a diameter of approximately 300 Angstroms. VP1 is situated at the 12 fivefold axes, whereas VP2 and VP3 are located at the quasi-sixfold axes. The naked capsid interacts with the host receptor HAVCR1 to provide virion attachment to and probably entry into the target cell. VP0 precursor is a component of the immature procapsids. Its function is as follows. Plays a role in the assembly of the 12 pentamers into an icosahedral structure. Has not been detected in mature virions, supposedly owing to its small size. Functionally, precursor component of immature procapsids that corresponds to an extended form of the structural protein VP1. After maturation, possibly by the host Cathepsin L, the assembly signal 2A is cleaved to give rise to the mature VP1 protein. In terms of biological role, functions as a viroporin. Affects membrane integrity and causes an increase in membrane permeability. Involved in host intracellular membrane rearrangements probably to give rise to the viral factories. Does not disrupt calcium homeostasis or glycoprotein trafficking. Antagonizes the innate immune response of the host by suppressing IFN-beta synthesis, which it achieves by interfering with the RIG-I/IFIH1 pathway. Affects membrane integrity and causes an increase in membrane permeability. Its function is as follows. Associates with and induces structural rearrangements of intracellular membranes. Displays RNA-binding activity. Functionally, the precursor 3ABC is targeted to the mitochondrial membrane where protease 3C activity cleaves and inhibits the host antiviral protein MAVS, thereby disrupting activation of IRF3 through the IFIH1/MDA5 pathway. In vivo, the protease activity of 3ABC precursor is more efficient in cleaving the 2BC precursor than that of protein 3C. The 3ABC precursor may therefore play a role in the proteolytic processing of the polyprotein. In terms of biological role, interacts with the 3CD precursor and with RNA structures found at both the 5'- and 3'-termini of the viral genome. Since the 3AB precursor contains the hydrophobic domain 3A, it probably anchors the whole viral replicase complex to intracellular membranes on which viral RNA synthesis occurs. May serve as membrane anchor to the 3AB and 3ABC precursors via its hydrophobic domain. May interact with RNA. Its function is as follows. Acts as a primer for viral RNA replication and remains covalently bound to viral genomic RNA. VPg is uridylylated prior to priming replication into VPg-pUpU. The VPg-pUpU is then used as primer on the genomic RNA poly(A) by the RNA-dependent RNA polymerase to replicate the viral genome. Functionally, cysteine protease that generates mature viral proteins from the precursor polyprotein. In addition to its proteolytic activity, it binds to viral RNA, and thus influences viral genome replication. RNA and substrate bind cooperatively to the protease. Cleaves IKBKG/NEMO to impair innate immune signaling. Cleaves host PABPC1 which may participate in the switch of viral translation to RNA synthesis. In terms of biological role, interacts with the 3AB precursor and with RNA structures found at both the 5'- and 3'-termini of the viral genome. Disrupts TLR3 signaling by degrading the host adapter protein TICAM1/TRIF. RNA-directed RNA polymerase 3D-POL replicates genomic and antigenomic RNA by recognizing replications specific signals. The polypeptide is Genome polyprotein (Human hepatitis A virus genotype IB (isolate HM175) (HHAV)).